Here is a 185-residue protein sequence, read N- to C-terminus: Peptidyl-tRNA hydrolase (185 aa).

Y14 provides a ligand contact to tRNA. H19 serves as the catalytic Proton acceptor. Residues Y64, N66, and N112 each coordinate tRNA.

It belongs to the PTH family. In terms of assembly, monomer.

Its subcellular location is the cytoplasm. The enzyme catalyses an N-acyl-L-alpha-aminoacyl-tRNA + H2O = an N-acyl-L-amino acid + a tRNA + H(+). Its function is as follows. Hydrolyzes ribosome-free peptidyl-tRNAs (with 1 or more amino acids incorporated), which drop off the ribosome during protein synthesis, or as a result of ribosome stalling. Functionally, catalyzes the release of premature peptidyl moieties from peptidyl-tRNA molecules trapped in stalled 50S ribosomal subunits, and thus maintains levels of free tRNAs and 50S ribosomes. The sequence is that of Peptidyl-tRNA hydrolase from Shouchella clausii (strain KSM-K16) (Alkalihalobacillus clausii).